The following is a 111-amino-acid chain: UPF0145 protein RBAM_010660 (111 aa).

It belongs to the UPF0145 family.

The chain is UPF0145 protein RBAM_010660 from Bacillus velezensis (strain DSM 23117 / BGSC 10A6 / LMG 26770 / FZB42) (Bacillus amyloliquefaciens subsp. plantarum).